Consider the following 523-residue polypeptide: Cysteine-rich secretory protein LCCL domain-containing 1 (523 aa).

The signal sequence occupies residues 1–23 (MKYVVQEWLRITTLLFIAQAVSA). An SCP domain is found at 66–206 (LDLHNKLRGQ…PKAVYLVCNY (141 aa)). A disordered region spans residues 246–298 (ERPYSPHEPEEETNEIERQRSKAQDATAQSRPRTHSPSGSTGSEDSEKNEVIS). Over residues 269–288 (QDATAQSRPRTHSPSGSTGS) the composition is skewed to polar residues. 2 LCCL domains span residues 302-397 (MSQI…ANSF) and 403-505 (TVQA…PGKQ). 4 disulfides stabilise this stretch: Cys308–Cys326, Cys330–Cys350, Cys409–Cys431, and Cys435–Cys458.

Belongs to the CRISP family.

The protein resides in the secreted. The polypeptide is Cysteine-rich secretory protein LCCL domain-containing 1 (CRISPLD1) (Gallus gallus (Chicken)).